The primary structure comprises 463 residues: MEKALSKTWSERFDKGLNPFIEKFNASIEFDICLLEEDLDGSIAHARMLGIQGIITKEEALRLENGLQQIRKEASDGLFHPVISDEDVHFAVEKKLIDLIGPVGKKLHTGRSRNDQVGTDLRLWLRKRIDEIDMDLVRLQKSLFLLAEENLYTLIPGYTHLQRAQPLSLAHHLLAYIEMAQRDRNRLKDVRKRVNISPLGAAALAGTSISISRKITSSELHFQGIYSNSLDAVSDRDFVVEFLGASSLIMAHLSRLSEEVILWASEEFAFIQLTDRCATGSSLMPQKKNPDVPELVRGKSGRVFGHLQAMLTMIKGLPLAYNKDFQEDKEAIFDSVKTVKNSLIAISILFEEGLIFRKERLNQAVSSDFSNATDVADYLVAKDIPFREAYQLVGRIVKTSLEEGILLKDIPLERWKTFHKFFEKDIYEKLLPSSVVESRLSAGGTGFERVQEQLLSWREKLFN.

The protein belongs to the lyase 1 family. Argininosuccinate lyase subfamily.

The protein resides in the cytoplasm. The catalysed reaction is 2-(N(omega)-L-arginino)succinate = fumarate + L-arginine. The protein operates within amino-acid biosynthesis; L-arginine biosynthesis; L-arginine from L-ornithine and carbamoyl phosphate: step 3/3. This chain is Argininosuccinate lyase, found in Prochlorococcus marinus (strain NATL2A).